We begin with the raw amino-acid sequence, 302 residues long: Protoheme IX farnesyltransferase (302 aa).

The next 9 membrane-spanning stretches (helical) occupy residues 28–48, 50–70, 95–115, 122–142, 150–170, 176–196, 221–241, 243–263, and 282–302; these read VVAL…PGVP, WSVL…AAVV, IAPL…MVVL, LTAW…TLFL, IVIG…AVTG, ALLL…ALAI, LHIL…FVTG, SGGI…QYAV, and ITYL…FVPA.

It belongs to the UbiA prenyltransferase family. Protoheme IX farnesyltransferase subfamily.

It localises to the cell inner membrane. It catalyses the reaction heme b + (2E,6E)-farnesyl diphosphate + H2O = Fe(II)-heme o + diphosphate. It participates in porphyrin-containing compound metabolism; heme O biosynthesis; heme O from protoheme: step 1/1. In terms of biological role, converts heme B (protoheme IX) to heme O by substitution of the vinyl group on carbon 2 of heme B porphyrin ring with a hydroxyethyl farnesyl side group. The polypeptide is Protoheme IX farnesyltransferase (Marinobacter nauticus (strain ATCC 700491 / DSM 11845 / VT8) (Marinobacter aquaeolei)).